Reading from the N-terminus, the 112-residue chain is MTALTQMKCEACQADAPKVTDEELAELIRMIPDWGVQVRDGIMQLERVYKFKNFKLAMAFTNKLADLAEEEFHHPGILTEWGKVTVTWWSHSIKGLHKNDFIMAAKTDQLLD.

The protein belongs to the pterin-4-alpha-carbinolamine dehydratase family.

It catalyses the reaction (4aS,6R)-4a-hydroxy-L-erythro-5,6,7,8-tetrahydrobiopterin = (6R)-L-erythro-6,7-dihydrobiopterin + H2O. The chain is Putative pterin-4-alpha-carbinolamine dehydratase from Shewanella sp. (strain MR-4).